A 258-amino-acid chain; its full sequence is Venom plasminogen activator (258 aa).

The signal sequence occupies residues 1–18 (MVLIRVLANLLILQLSYA). A propeptide spanning residues 19–24 (QKSSEL) is cleaved from the precursor. Positions 25–249 (VVGGDECNIN…YTDWIQSIIS (225 aa)) constitute a Peptidase S1 domain. 6 disulfides stabilise this stretch: Cys31/Cys163, Cys50/Cys66, Cys98/Cys256, Cys142/Cys210, Cys174/Cys189, and Cys200/Cys225. Asn44 carries an N-linked (GlcNAc...) asparagine glycan. Catalysis depends on charge relay system residues His65 and Asp110. The active-site Charge relay system is the Ser204.

Belongs to the peptidase S1 family. Snake venom subfamily. In terms of assembly, monomer. Expressed by the venom gland.

Its subcellular location is the secreted. Snake venom serine protease that activates plasminogen. Shows a preferential cleavage at Arg-|-Xaa instead of Lys-|-Xaa bonds. This chain is Venom plasminogen activator, found in Agkistrodon piscivorus leucostoma (Western cottonmouth).